The sequence spans 322 residues: Acetyl-coenzyme A carboxylase carboxyl transferase subunit alpha (322 aa).

Residues 40-297 form the CoA carboxyltransferase C-terminal domain; that stretch reads PLQKKLGDLR…RETLTRNLEE (258 aa).

Belongs to the AccA family. Acetyl-CoA carboxylase is a heterohexamer composed of biotin carboxyl carrier protein (AccB), biotin carboxylase (AccC) and two subunits each of ACCase subunit alpha (AccA) and ACCase subunit beta (AccD).

It is found in the cytoplasm. It catalyses the reaction N(6)-carboxybiotinyl-L-lysyl-[protein] + acetyl-CoA = N(6)-biotinyl-L-lysyl-[protein] + malonyl-CoA. The protein operates within lipid metabolism; malonyl-CoA biosynthesis; malonyl-CoA from acetyl-CoA: step 1/1. In terms of biological role, component of the acetyl coenzyme A carboxylase (ACC) complex. First, biotin carboxylase catalyzes the carboxylation of biotin on its carrier protein (BCCP) and then the CO(2) group is transferred by the carboxyltransferase to acetyl-CoA to form malonyl-CoA. The chain is Acetyl-coenzyme A carboxylase carboxyl transferase subunit alpha from Gemmatimonas aurantiaca (strain DSM 14586 / JCM 11422 / NBRC 100505 / T-27).